The following is a 151-amino-acid chain: SsrA-binding protein (151 aa).

The protein belongs to the SmpB family.

The protein localises to the cytoplasm. Functionally, required for rescue of stalled ribosomes mediated by trans-translation. Binds to transfer-messenger RNA (tmRNA), required for stable association of tmRNA with ribosomes. tmRNA and SmpB together mimic tRNA shape, replacing the anticodon stem-loop with SmpB. tmRNA is encoded by the ssrA gene; the 2 termini fold to resemble tRNA(Ala) and it encodes a 'tag peptide', a short internal open reading frame. During trans-translation Ala-aminoacylated tmRNA acts like a tRNA, entering the A-site of stalled ribosomes, displacing the stalled mRNA. The ribosome then switches to translate the ORF on the tmRNA; the nascent peptide is terminated with the 'tag peptide' encoded by the tmRNA and targeted for degradation. The ribosome is freed to recommence translation, which seems to be the essential function of trans-translation. The polypeptide is SsrA-binding protein (Flavobacterium johnsoniae (strain ATCC 17061 / DSM 2064 / JCM 8514 / BCRC 14874 / CCUG 350202 / NBRC 14942 / NCIMB 11054 / UW101) (Cytophaga johnsonae)).